The chain runs to 131 residues: MNDSVTLRTRKFMTNRLLQRKQMVLDVLHPGKATVPKTEIREKLAKMYKTTPDVVFVFGFKTQFGGGKTTGFAMVYDSLDYAKKNEPKYRLARHGLYEKKKTSRKQRKERKNRMKKVRGTKKASVGAAGKK.

Residues 93 to 131 (RHGLYEKKKTSRKQRKERKNRMKKVRGTKKASVGAAGKK) form a disordered region. Basic residues predominate over residues 101 to 121 (KTSRKQRKERKNRMKKVRGTK).

The protein belongs to the eukaryotic ribosomal protein eS24 family. Component of the small ribosomal subunit. Part of the small subunit (SSU) processome, composed of more than 70 proteins and the RNA chaperone small nucleolar RNA (snoRNA) U3.

Its subcellular location is the cytoplasm. It localises to the nucleus. The protein resides in the nucleolus. In terms of biological role, component of the small ribosomal subunit. The ribosome is a large ribonucleoprotein complex responsible for the synthesis of proteins in the cell. Required for processing of pre-rRNA and maturation of 40S ribosomal subunits. Part of the small subunit (SSU) processome, first precursor of the small eukaryotic ribosomal subunit. During the assembly of the SSU processome in the nucleolus, many ribosome biogenesis factors, an RNA chaperone and ribosomal proteins associate with the nascent pre-rRNA and work in concert to generate RNA folding, modifications, rearrangements and cleavage as well as targeted degradation of pre-ribosomal RNA by the RNA exosome. The polypeptide is Small ribosomal subunit protein eS24 (rps24) (Ictalurus punctatus (Channel catfish)).